Reading from the N-terminus, the 311-residue chain is Nod factor export ATP-binding protein I (311 aa).

Residues 13-243 (IDLAGVSKSY…QIGCPVIEIY (231 aa)) form the ABC transporter domain. 45–52 (GPNGAGKS) lines the ATP pocket.

This sequence belongs to the ABC transporter superfamily. Lipooligosaccharide exporter (TC 3.A.1.102) family. The complex is composed of two ATP-binding proteins (NodI) and two transmembrane proteins (NodJ).

It localises to the cell inner membrane. Functionally, part of the ABC transporter complex NodIJ involved in the export of the nodulation factors (Nod factors), the bacterial signal molecules that induce symbiosis and subsequent nodulation induction. Nod factors are LCO (lipo-chitin oligosaccharide), a modified beta-1,4-linked N-acetylglucosamine oligosaccharide. This subunit is responsible for energy coupling to the transport system. In Rhizobium johnstonii (strain DSM 114642 / LMG 32736 / 3841) (Rhizobium leguminosarum bv. viciae), this protein is Nod factor export ATP-binding protein I.